The following is a 1522-amino-acid chain: Adhesion G protein-coupled receptor B3 (1522 aa).

An N-terminal signal peptide occupies residues 1-25 (MKAVRNLLIYIFSTYLLVMFGFNAA). Residues 26 to 880 (QDFWCSTLVK…MESSGTPSVT (855 aa)) lie on the Extracellular side of the membrane. Positions 30–159 (CSTLVKGVIY…KSFFEFLVLN (130 aa)) constitute a CUB domain. 5 N-linked (GlcNAc...) asparagine glycosylation sites follow: N51, N54, N82, N105, and N241. TSP type-1 domains follow at residues 291 to 343 (ESGV…ALCP), 345 to 398 (HGVW…ALCP), 400 to 453 (DGQW…PECT), and 455 to 508 (NGQW…QRCP). 14 disulfide bridges follow: C303/C336, C307/C342, C318/C326, C357/C392, C361/C397, C372/C382, C412/C447, C416/C452, C427/C437, C467/C502, C471/C507, C482/C492, C514/C549, and C537/C567. N-linked (GlcNAc...) asparagine glycosylation is present at N337. An N-linked (GlcNAc...) asparagine glycan is attached at N418. N-linked (GlcNAc...) asparagine glycosylation occurs at N540. S619 is subject to Phosphoserine. Residues N625, N779, N812, and N828 are each glycosylated (N-linked (GlcNAc...) asparagine). Residues 693–869 (QNSYLMTGNV…AILAQQPREI (177 aa)) enclose the GAIN-B domain. 2 disulfides stabilise this stretch: C819-C851 and C839-C853. The interval 819-869 (CVLWDDSKSNESLGTWSTQGCKTVLTDASHTKCLCDRLSTFAILAQQPREI) is GPS. Residues 881–901 (LIVGSGLSCLALITLAVVYAA) form a helical membrane-spanning segment. The Cytoplasmic segment spans residues 902–910 (LWRYIRSER). A helical transmembrane segment spans residues 911–931 (SIILINFCLSIISSNILILVG). The Extracellular portion of the chain corresponds to 932–939 (QTQTHNKS). A glycan (N-linked (GlcNAc...) asparagine) is linked at N937. The chain crosses the membrane as a helical span at residues 940–960 (ICTTTTAFLHFFFLASFCWVL). Residues 961-981 (TEAWQSYMAVTGKIRTRLIRK) lie on the Cytoplasmic side of the membrane. Residues 982 to 1002 (RFLCLGWGLPALVVATSVGFT) traverse the membrane as a helical segment. Residues 1003 to 1023 (RTKGYGTDHYCWLSLEGGLLY) are Extracellular-facing. The chain crosses the membrane as a helical span at residues 1024–1044 (AFVGPAAAVVLVNMVIGILVF). The Cytoplasmic segment spans residues 1045–1098 (NKLVSRDGILDKKLKHRAGQMSEPHSGLTLKCAKCGVVSTTALSATTASNAMAS). Residues 1099–1119 (LWSSCVVLPLLALTWMSAVLA) traverse the membrane as a helical segment. Residues 1120-1125 (MTDKRS) lie on the Extracellular side of the membrane. The chain crosses the membrane as a helical span at residues 1126-1146 (ILFQILFAVFDSLQGFVIVMV). Residues 1147 to 1522 (HCILRREVQD…VQEGDFQTEV (376 aa)) are Cytoplasmic-facing. A phosphoserine mark is found at S1220 and S1411.

This sequence belongs to the G-protein coupled receptor 2 family. Adhesion G-protein coupled receptor (ADGR) subfamily. As to quaternary structure, forms a heterodimer, consisting of a large extracellular region non-covalently linked to a seven-transmembrane moiety. Interacts (via its TSRs) with C1QL1, C1QL2, C1QL3 and C1QL4. Interacts via (C-terminus) with ELMO1, ELMO2 and ELMO3. In terms of processing, the endogenous protein is proteolytically cleaved into 2 subunits, an extracellular subunit and a seven-transmembrane subunit. As to expression, brain-specific expression.

Its subcellular location is the cell membrane. Functionally, receptor that plays a role in the regulation of synaptogenesis and dendritic spine formation at least partly via interaction with ELMO1 and RAC1 activity. Promotes myoblast fusion through ELMO/DOCK1. This chain is Adhesion G protein-coupled receptor B3 (Adgrb3), found in Mus musculus (Mouse).